Consider the following 340-residue polypeptide: MSVLSPLIIRLCSPRGFCAGVDRAIQIVLLALKKYGAPVYVRHEIVHNRYVVEGLQQRGAIFVEELDEIPEEHRNQPVVFSAHGVPKSVPEQADRYNLFYLDATCPLVSKVHKQAMRHQRHGRHVILIGHAGHPEVIGTMGQLEKGAVTLIETIEDALHYQPDDPDKLGFVTQTTLSVEDTAGILDVLQRRFPALEPPAAESICYATTNRQNAVKAAALGSDLFLIVGAPNSSNSRRLVEVAERFGARQSILVQRADEIDFDRLGPLSVVSLSAGASAPEIIVDEIISAFRERYDVTIELSETVVEMETFLVNRELRNVILTPQDMAFVNGQSETLKNKN.

A [4Fe-4S] cluster-binding site is contributed by C18. (2E)-4-hydroxy-3-methylbut-2-enyl diphosphate contacts are provided by H47 and H83. H47 and H83 together coordinate dimethylallyl diphosphate. Isopentenyl diphosphate is bound by residues H47 and H83. Residue C105 participates in [4Fe-4S] cluster binding. H133 serves as a coordination point for (2E)-4-hydroxy-3-methylbut-2-enyl diphosphate. Dimethylallyl diphosphate is bound at residue H133. Residue H133 coordinates isopentenyl diphosphate. The active-site Proton donor is the E135. T174 serves as a coordination point for (2E)-4-hydroxy-3-methylbut-2-enyl diphosphate. Residue C204 coordinates [4Fe-4S] cluster. S232, S233, N234, and S277 together coordinate (2E)-4-hydroxy-3-methylbut-2-enyl diphosphate. Residues S232, S233, N234, and S277 each coordinate dimethylallyl diphosphate. The isopentenyl diphosphate site is built by S232, S233, N234, and S277.

The protein belongs to the IspH family. The cofactor is [4Fe-4S] cluster.

The enzyme catalyses isopentenyl diphosphate + 2 oxidized [2Fe-2S]-[ferredoxin] + H2O = (2E)-4-hydroxy-3-methylbut-2-enyl diphosphate + 2 reduced [2Fe-2S]-[ferredoxin] + 2 H(+). The catalysed reaction is dimethylallyl diphosphate + 2 oxidized [2Fe-2S]-[ferredoxin] + H2O = (2E)-4-hydroxy-3-methylbut-2-enyl diphosphate + 2 reduced [2Fe-2S]-[ferredoxin] + 2 H(+). It participates in isoprenoid biosynthesis; dimethylallyl diphosphate biosynthesis; dimethylallyl diphosphate from (2E)-4-hydroxy-3-methylbutenyl diphosphate: step 1/1. The protein operates within isoprenoid biosynthesis; isopentenyl diphosphate biosynthesis via DXP pathway; isopentenyl diphosphate from 1-deoxy-D-xylulose 5-phosphate: step 6/6. Catalyzes the conversion of 1-hydroxy-2-methyl-2-(E)-butenyl 4-diphosphate (HMBPP) into a mixture of isopentenyl diphosphate (IPP) and dimethylallyl diphosphate (DMAPP). Acts in the terminal step of the DOXP/MEP pathway for isoprenoid precursor biosynthesis. The chain is 4-hydroxy-3-methylbut-2-enyl diphosphate reductase from Bartonella quintana (strain Toulouse) (Rochalimaea quintana).